The chain runs to 872 residues: Lysosomal cholesterol signaling protein (872 aa).

Topologically, residues 1 to 40 (MNSFSNLPAENLTIAVNMTKTLPTAVMHGFNSTNDPPSMS) are lumenal. Residues 3–372 (SFSNLPAENL…SAWLLTFPTM (370 aa)) are PIN-like transporter. N-linked (GlcNAc...) asparagine glycosylation is found at asparagine 11, asparagine 17, and asparagine 31. Residues 41–61 (ITRLFPALLECFGIVLCGYIA) form a helical membrane-spanning segment. Phenylalanine 45 and tyrosine 59 together coordinate cholesterol. Residues 62-81 (GRANVITSTQAKGLGNFVSR) are Cytoplasmic-facing. A helical transmembrane segment spans residues 82-102 (FALPALLFKNMVVLNFSNVDW). Over 103–106 (SFLY) the chain is Lumenal. Residues 107–127 (SILIAKASVFFIVCVLTLLVA) form a helical membrane-spanning segment. The Cytoplasmic segment spans residues 128–135 (SPDSRFSK). The chain crosses the membrane as a discontinuously helical span at residues 136–156 (AGLFPIFATQSNDFALGYPIV). Residues 157–169 (EALYQTTYPEYLQ) lie on the Lumenal side of the membrane. The helical transmembrane segment at 170 to 190 (YIYLVAPISLMMLNPIGFIFC) threads the bilayer. The Cytoplasmic portion of the chain corresponds to 191 to 215 (EIQKWKDTQNASQNKIKIVGLGLLR). Residues 216-236 (VLQNPIVFMVFIGIAFNFILD) form a discontinuously helical membrane-spanning segment. Residues 237-245 (RKVPVYVEN) are Lumenal-facing. Residues 246 to 266 (FLDGLGNSFSGSALFYLGLTM) form a discontinuously helical membrane-spanning segment. The Cytoplasmic segment spans residues 267–275 (VGKIKRLKK). Cholesterol is bound by residues glycine 268, lysine 269, and isoleucine 270. Residues 276-296 (SAFVVLILLITAKLLVLPLLC) traverse the membrane as a helical segment. At 297-317 (REMVELLDKGDSVVNHTSLSN) the chain is on the lumenal side. N-linked (GlcNAc...) asparagine glycosylation occurs at asparagine 311. The chain crosses the membrane as a discontinuously helical span at residues 318 to 338 (YAFLYGVFPVAPGVAIFATQF). Topologically, residues 339-348 (NMEVEIITSG) are cytoplasmic. The helical transmembrane segment at 349–369 (MVISTFVSAPIMYVSAWLLTF) threads the bilayer. Residues 370–383 (PTMDPKPLAYAIQN) lie on the Lumenal side of the membrane. The tract at residues 382–719 (QNVSFDISIV…FGIFGLDKHL (338 aa)) is GPCR. Asparagine 383 carries N-linked (GlcNAc...) asparagine glycosylation. Residues 384–404 (VSFDISIVSLISLIWSQAILL) traverse the membrane as a helical segment. At 405-416 (LSKKYKQLPHML) the chain is on the cytoplasmic side. The chain crosses the membrane as a helical span at residues 417–437 (TTNLLIAQSIVCAGMMIWNFV). Residues 438-440 (KEK) lie on the Lumenal side of the membrane. Residues 441–461 (NFVGQILVFVLLYSSLYSTYL) form a helical membrane-spanning segment. Residues 462 to 482 (WTGLLAISLFLLKKRERVQIP) lie on the Cytoplasmic side of the membrane. Residues 483 to 503 (VGIIIISGWGIPALLVGVLLI) form a helical membrane-spanning segment. At 504 to 522 (TGKHSGDSIDSAFFYGKEQ) the chain is on the lumenal side. The helical transmembrane segment at 523–543 (MITTAVTLFCSILIAGISLMC) threads the bilayer. Over 544–662 (MNRTAQAGSY…GDQQLTRHVL (119 aa)) the chain is Cytoplasmic. Position 659 (arginine 659) interacts with cholesterol. A helical membrane pass occupies residues 663–683 (LCLLLIIGLFANLSSCLWWLF). Over 684-693 (NQEPGRLYVE) the chain is Lumenal. Residues 694–714 (LQFFCAVFNFGQGFISFGIFG) traverse the membrane as a helical segment. Residues 715–872 (LDKHLIILPF…SSPPSHSPKT (158 aa)) lie on the Cytoplasmic side of the membrane. Residues 759–837 (YHRDLCIRNI…DEYLFYRFLQ (79 aa)) form the DEP domain.

As to quaternary structure, homodimer; via the transporter region and DEP domain. Interacts with the GATOR1 complex; preventing interaction between GATOR1 and KICSTOR; interaction is disrupted upon cholesterol starvation.

Its subcellular location is the lysosome membrane. Functionally, cholesterol-binding protein that acts as a regulator of mTORC1 signaling pathway. Acts as a sensor of cholesterol to signal cholesterol sufficiency to mTORC1: in presence of cholesterol, binds cholesterol, leading to disruption of the interaction between the GATOR1 and KICSTOR complexes and promotion of mTORC1 signaling. Upon cholesterol starvation, GPR155/LYCHOS is unable to perturb the association between GATOR1 and KICSTOR, leading to mTORC1 signaling inhibition. Binds indole-3-acetic acid and may play a role in tryptophan metabolism. This chain is Lysosomal cholesterol signaling protein (GPR155), found in Pongo abelii (Sumatran orangutan).